Reading from the N-terminus, the 183-residue chain is Shikimate kinase (183 aa).

18 to 23 provides a ligand contact to ATP; sequence GVGKTT. Residue Thr22 participates in Mg(2+) binding. 3 residues coordinate substrate: Asp40, Arg64, and Gly86. Arg125 provides a ligand contact to ATP. Arg143 provides a ligand contact to substrate.

The protein belongs to the shikimate kinase family. As to quaternary structure, monomer. The cofactor is Mg(2+).

The protein resides in the cytoplasm. The enzyme catalyses shikimate + ATP = 3-phosphoshikimate + ADP + H(+). It functions in the pathway metabolic intermediate biosynthesis; chorismate biosynthesis; chorismate from D-erythrose 4-phosphate and phosphoenolpyruvate: step 5/7. Catalyzes the specific phosphorylation of the 3-hydroxyl group of shikimic acid using ATP as a cosubstrate. The sequence is that of Shikimate kinase from Oceanobacillus iheyensis (strain DSM 14371 / CIP 107618 / JCM 11309 / KCTC 3954 / HTE831).